The following is a 1335-amino-acid chain: Membrane-associated phosphatidylinositol transfer protein 2 (1335 aa).

2 disordered regions span residues 32-51 (ETHGQGSGVEILENRPYTDG) and 262-341 (EEGP…SEEE). Polar residues predominate over residues 275 to 286 (KDQASGTTSDPG). Positions 299-319 (KQWSTSSKSSRSSKRGASPSR) are enriched in low complexity. Residues S334, S338, S365, and S586 each carry the phosphoserine modification. The tract at residues 606–657 (HCSGGSGGGGSGGSSLESSRHLSRSNIDIPRSNGTEDSRRQLPRKRSDSSTY) is disordered. Gly residues predominate over residues 609–618 (GGSGGGGSGG). S630 carries the post-translational modification Phosphoserine. A compositionally biased stretch (basic and acidic residues) spans 639-653 (GTEDSRRQLPRKRSD). Phosphoserine occurs at positions 686, 687, and 688. The DDHD domain occupies 701–949 (FDFEIADLFL…VSFLLRQVMR (249 aa)). R814 is modified (omega-N-methylarginine). Residues 861–880 (ALPPPSPTTQGPRARARQVS) form a disordered region. S1263 is modified (phosphoserine). The disordered stretch occupies residues 1282-1313 (TISAQPSGPSHRHDRTQTQMDSEQRGQRSMSV). Polar residues predominate over residues 1298-1313 (QTQMDSEQRGQRSMSV).

Belongs to the PtdIns transfer protein family. PI transfer class IIA subfamily. Interacts with CPNE4 (via VWFA domain). Interacts with PTK2B via its C-terminus. In terms of tissue distribution, detected in retina and in the dentate gyrus of the cerebellum.

It is found in the endomembrane system. It localises to the cytoplasm. Its subcellular location is the cytoskeleton. Catalyzes the transfer of phosphatidylinositol and phosphatidylcholine between membranes (in vitro). Binds calcium ions. The sequence is that of Membrane-associated phosphatidylinositol transfer protein 2 (Pitpnm2) from Mus musculus (Mouse).